Consider the following 557-residue polypeptide: MRTEDLNATWAGSLLDRLRGHGVHDVCIAPGSRSAPLALAAARRADRGDDLTLHTHFDERGLAFYALGLIRASRRPVAVITTSGTAAPNLHPAVAEARQSSLPLVVITADRPPELHHCGANQAMPQEDLFAPLVRAALALPPPEATLCGHWLNRRLDATLAEATGAGATGPIHLNVPLREPLYGGTEHPPVAPPLPPRRAPRAAAPPLGPAEPPQLFVAGGLNPEEAEAVLETAAAGNIPILADPSSQLRLRAHPCILGGAEHLLATAAGRAALGQARQVVQFGGRLTGRRLPAWLTEHAPQRWLITGDDHDLDPDWQATTVQADIATAARALRPAAPQPPLPGLTEALTRVAETRSAALANEPFAEPAATERLSRTLPPGMALFAGNSLPIRAVDLFAVAKHGNPCVTQRGVSGIDGLIATAAGFAHHHPDGVTLVIGDLSALHDLNSLALLDQARHTCVVVVLNNDGGGIFDLLPARSEGDDAHRRLFRMPHGYGFSQAAAQFRLPYWQCTDGDSLEAAHREACTRPGGSVIEVACPPGAGSEQMANLFRTLEAL.

The segment at 183 to 206 (YGGTEHPPVAPPLPPRRAPRAAAP) is disordered.

It belongs to the TPP enzyme family. MenD subfamily. Homodimer. Mg(2+) serves as cofactor. The cofactor is Mn(2+). Requires thiamine diphosphate as cofactor.

It carries out the reaction isochorismate + 2-oxoglutarate + H(+) = 5-enolpyruvoyl-6-hydroxy-2-succinyl-cyclohex-3-ene-1-carboxylate + CO2. It participates in quinol/quinone metabolism; 1,4-dihydroxy-2-naphthoate biosynthesis; 1,4-dihydroxy-2-naphthoate from chorismate: step 2/7. It functions in the pathway quinol/quinone metabolism; menaquinone biosynthesis. Its function is as follows. Catalyzes the thiamine diphosphate-dependent decarboxylation of 2-oxoglutarate and the subsequent addition of the resulting succinic semialdehyde-thiamine pyrophosphate anion to isochorismate to yield 2-succinyl-5-enolpyruvyl-6-hydroxy-3-cyclohexene-1-carboxylate (SEPHCHC). The chain is 2-succinyl-5-enolpyruvyl-6-hydroxy-3-cyclohexene-1-carboxylate synthase from Halorhodospira halophila (strain DSM 244 / SL1) (Ectothiorhodospira halophila (strain DSM 244 / SL1)).